The sequence spans 56 residues: Bacteriocin sublancin-168 (56 aa).

A propeptide spanning residues 1-19 (MEKLFKEVKLEELENQKGS) is cleaved from the precursor. 2 cysteine pairs are disulfide-bonded: cysteine 26–cysteine 55 and cysteine 33–cysteine 48. An S-linked (Glc) cysteine; by host glycan is attached at cysteine 41.

Monomer. Post-translationally, production of active sublancin-168 requires at least one thiol-disulfide oxidoreductase (BdbB or, in its absence, BdbC). Membrane translocation and cleavage of the precursor are probably performed by SunT.

It localises to the secreted. Its function is as follows. Bacteriocin active against Gram-positive bacteria. Inhibits B.cereus spore outgrowth, after the germination stage, approximately 1000-fold better than it inhibits exponential growth of the same cells. Inhibits B.subtilis strain ATCC 6633. In Bacillus pumilus (Bacillus mesentericus), this protein is Bacteriocin sublancin-168 (sunA).